A 380-amino-acid polypeptide reads, in one-letter code: DNA-directed RNA polymerase subunit Rpo1C (380 aa).

Belongs to the RNA polymerase beta' chain family. Part of the RNA polymerase complex.

The protein resides in the cytoplasm. It carries out the reaction RNA(n) + a ribonucleoside 5'-triphosphate = RNA(n+1) + diphosphate. DNA-dependent RNA polymerase (RNAP) catalyzes the transcription of DNA into RNA using the four ribonucleoside triphosphates as substrates. Forms part of the jaw domain. This chain is DNA-directed RNA polymerase subunit Rpo1C, found in Archaeoglobus fulgidus (strain ATCC 49558 / DSM 4304 / JCM 9628 / NBRC 100126 / VC-16).